We begin with the raw amino-acid sequence, 959 residues long: Glycine dehydrogenase (decarboxylating) (959 aa).

Lys-708 is subject to N6-(pyridoxal phosphate)lysine.

The protein belongs to the GcvP family. The glycine cleavage system is composed of four proteins: P, T, L and H. Requires pyridoxal 5'-phosphate as cofactor.

The catalysed reaction is N(6)-[(R)-lipoyl]-L-lysyl-[glycine-cleavage complex H protein] + glycine + H(+) = N(6)-[(R)-S(8)-aminomethyldihydrolipoyl]-L-lysyl-[glycine-cleavage complex H protein] + CO2. Its function is as follows. The glycine cleavage system catalyzes the degradation of glycine. The P protein binds the alpha-amino group of glycine through its pyridoxal phosphate cofactor; CO(2) is released and the remaining methylamine moiety is then transferred to the lipoamide cofactor of the H protein. This chain is Glycine dehydrogenase (decarboxylating), found in Yersinia enterocolitica serotype O:8 / biotype 1B (strain NCTC 13174 / 8081).